A 321-amino-acid polypeptide reads, in one-letter code: MASETFYKVGDGEEAMLKKETLNVLNALDQMSKPFPNPKSMNRTVTTKSLPLSSRGSLVNFLEEDAINLPKHMPLEDSECSSDDTSISPMSSTLLNPIKLAVTQPNSRFFAGMLEGELNKLSLSSIAKSTEKGHLALCPQSKSQMAPGGLLDFDNPEVDTDTSSTPSESSVVLDVPEAPFVCEHTVSDSTAVISWTYAPGKQQVSFYQVLLQEVVRKNSGETPKAKNRPWIFNKILGTTVKLMELKPNTSYCLTVRAANTAGVGTWCKPYKFATVATDLNSFPENNPIQITVQRKEPQRKTVSLGLEDMRRLEDLEHLFPY.

Positions 175–277 constitute a Fibronectin type-III domain; sequence VPEAPFVCEH…KPYKFATVAT (103 aa).

The sequence is that of Fibronectin type III domain-containing protein 8 (FNDC8) from Bos taurus (Bovine).